We begin with the raw amino-acid sequence, 510 residues long: Maturase K (510 aa).

This sequence belongs to the intron maturase 2 family. MatK subfamily.

It is found in the plastid. Its subcellular location is the chloroplast. In terms of biological role, usually encoded in the trnK tRNA gene intron. Probably assists in splicing its own and other chloroplast group II introns. This chain is Maturase K, found in Spirodela intermedia (Intermediate duckweed).